The sequence spans 494 residues: 3-octaprenyl-4-hydroxybenzoate carboxy-lyase (494 aa).

Mn(2+) is bound at residue N172. Residues 175–177, 189–191, and 194–195 each bind prenylated FMN; these read IYR, RWL, and RG. E238 provides a ligand contact to Mn(2+). D294 acts as the Proton donor in catalysis.

This sequence belongs to the UbiD family. Homohexamer. Prenylated FMN serves as cofactor. Requires Mn(2+) as cofactor.

The protein resides in the cell membrane. It catalyses the reaction a 4-hydroxy-3-(all-trans-polyprenyl)benzoate + H(+) = a 2-(all-trans-polyprenyl)phenol + CO2. It participates in cofactor biosynthesis; ubiquinone biosynthesis. In terms of biological role, catalyzes the decarboxylation of 3-octaprenyl-4-hydroxy benzoate to 2-octaprenylphenol, an intermediate step in ubiquinone biosynthesis. In Herminiimonas arsenicoxydans, this protein is 3-octaprenyl-4-hydroxybenzoate carboxy-lyase.